A 499-amino-acid chain; its full sequence is L-arabinose isomerase (499 aa).

4 residues coordinate Mn(2+): E306, E333, H350, and H449.

The protein belongs to the arabinose isomerase family. The cofactor is Mn(2+).

The catalysed reaction is beta-L-arabinopyranose = L-ribulose. It functions in the pathway carbohydrate degradation; L-arabinose degradation via L-ribulose; D-xylulose 5-phosphate from L-arabinose (bacterial route): step 1/3. Catalyzes the conversion of L-arabinose to L-ribulose. The chain is L-arabinose isomerase from Aeromonas salmonicida (strain A449).